We begin with the raw amino-acid sequence, 104 residues long: DET1- and DDB1-associated protein 1 (104 aa).

A compositionally biased stretch (basic and acidic residues) spans lysine 67–glutamate 77. The tract at residues lysine 67–serine 104 is disordered.

This sequence belongs to the DDA1 family. Component of numerous DCX (DDB1-CUL4-X-box) E3 ubiquitin-protein ligase complexes which consist of a core of DDB1, cullin-4 (CUL4A or CUL4B), DDA1 and RBX1.

It participates in protein modification; protein ubiquitination. Functionally, functions as a component of numerous distinct DCX (DDB1-CUL4-X-box) E3 ubiquitin-protein ligase complexes which mediate the ubiquitination and subsequent proteasomal degradation of target proteins. In the DCX complexes, acts as a scaffolding subunit required to stabilize the complex. In Danio rerio (Zebrafish), this protein is DET1- and DDB1-associated protein 1.